The sequence spans 1047 residues: Error-prone DNA polymerase (1047 aa).

The protein belongs to the DNA polymerase type-C family. DnaE2 subfamily.

It is found in the cytoplasm. The catalysed reaction is DNA(n) + a 2'-deoxyribonucleoside 5'-triphosphate = DNA(n+1) + diphosphate. Its function is as follows. DNA polymerase involved in damage-induced mutagenesis and translesion synthesis (TLS). It is not the major replicative DNA polymerase. This Methylococcus capsulatus (strain ATCC 33009 / NCIMB 11132 / Bath) protein is Error-prone DNA polymerase.